The primary structure comprises 95 residues: Citrate lyase acyl carrier protein (95 aa).

Ser14 is subject to O-(phosphoribosyl dephospho-coenzyme A)serine.

It belongs to the CitD family. In terms of assembly, oligomer with a subunit composition of (alpha,beta,gamma)6.

It localises to the cytoplasm. Its function is as follows. Covalent carrier of the coenzyme of citrate lyase. The polypeptide is Citrate lyase acyl carrier protein (Haemophilus influenzae (strain PittGG)).